The following is a 637-amino-acid chain: Clathrin coat assembly protein AP180A (637 aa).

An ENTH domain is found at 1–126 (MTTYFKLVKG…REFGKIKKDY (126 aa)). The segment at 555-637 (TQNHLQQQQQ…YANNLNLIDM (83 aa)) is disordered. 2 stretches are compositionally biased toward low complexity: residues 560 to 579 (QQQQ…QPQQ) and 600 to 622 (QPQN…TQQP). The clathrin-binding stretch occupies residues 587-637 (AGANPVTNITGTVQPQNFPFYPQQQPQPEQSQTQQPVLGNQYANNLNLIDM). The span at 623 to 637 (VLGNQYANNLNLIDM) shows a compositional bias: polar residues.

Belongs to the AP180 family. In terms of assembly, interacts with PAN1 and the clathrin heavy and light chains CHC1 and CLC1.

Its subcellular location is the bud. It is found in the bud neck. The protein localises to the cell membrane. It localises to the cytoplasm. In terms of biological role, involved in endocytosis and clathrin cage assembly. The protein is Clathrin coat assembly protein AP180A (YAP1801) of Saccharomyces cerevisiae (strain ATCC 204508 / S288c) (Baker's yeast).